A 298-amino-acid polypeptide reads, in one-letter code: Glutamate/glycine mitochondrial carrier ymc1 (298 aa).

Solcar repeat units lie at residues 14-98 (TKDF…CKRF), 106-193 (VTMP…LVKN), and 206-294 (TPGW…VSQH). The next 6 membrane-spanning stretches (helical) occupy residues 17–37 (FLAG…FDCV), 67–87 (LAAF…CVSI), 112–132 (YVSG…VEHV), 172–192 (TAAR…ALVK), 212–232 (CVFG…FDIV), and 266–287 (FYRG…TFYV).

This sequence belongs to the mitochondrial carrier (TC 2.A.29) family.

It is found in the mitochondrion inner membrane. Acts as a glutamate and glycine mitochondrial transmembrane transporter. This is Glutamate/glycine mitochondrial carrier ymc1 (ymc1) from Schizosaccharomyces pombe (strain 972 / ATCC 24843) (Fission yeast).